Reading from the N-terminus, the 1350-residue chain is Ubiquitin carboxyl-terminal hydrolase 47 (1350 aa).

The tract at residues 111–138 is disordered; that stretch reads DGEQPQLTSDESGTADSSGLDDSSQEKF. The segment covering 115 to 132 has biased composition (polar residues); that stretch reads PQLTSDESGTADSSGLDD. The region spanning 173–548 is the USP domain; sequence VGLVNQAMTC…NAYMLMYRLK (376 aa). Residue Cys-182 is the Nucleophile of the active site. Residues 409–437 are disordered; the sequence is EDEKSPQTDSCTDSGAENEGSCHSDQMSN. The segment covering 415 to 437 has biased composition (polar residues); that stretch reads QTDSCTDSGAENEGSCHSDQMSN. His-487 (proton acceptor) is an active-site residue. Disordered regions lie at residues 815–836 and 859–1000; these read HPRP…PQED and SLQQ…ESGK. Over residues 859–877 the composition is skewed to polar residues; it reads SLQQHQDGGNGDSSKSTEG. The segment covering 916 to 926 has biased composition (basic and acidic residues); the sequence is PEERSDSDVNN. Positions 929–945 are enriched in low complexity; that stretch reads STSSVDSDILSSSHSSD. The segment covering 973-982 has biased composition (basic and acidic residues); sequence KANDGKKETW. Residues 983 to 996 show a composition bias toward acidic residues; the sequence is DTAEEDSGTDSEYD.

The protein belongs to the peptidase C19 family. USP47 subfamily.

It is found in the cytoplasm. The catalysed reaction is Thiol-dependent hydrolysis of ester, thioester, amide, peptide and isopeptide bonds formed by the C-terminal Gly of ubiquitin (a 76-residue protein attached to proteins as an intracellular targeting signal).. Its function is as follows. Ubiquitin-specific protease that specifically deubiquitinates monoubiquitinated DNA polymerase beta (polb), stabilizing polb thereby playing a role in base-excision repair (BER). This is Ubiquitin carboxyl-terminal hydrolase 47 (usp47) from Xenopus laevis (African clawed frog).